We begin with the raw amino-acid sequence, 944 residues long: UvrABC system protein A (944 aa).

In terms of domain architecture, ABC transporter 1 spans 1–242; the sequence is MSKVDFLHIK…GKGIVKVENV (242 aa). 34 to 41 contributes to the ATP binding site; it reads GLSGSGKS. The C4-type; degenerate zinc-finger motif lies at 256 to 283; it reads CPKGDFEMPKIETRLFSFNSPYGMCQNC. ABC transporter domains follow at residues 359 to 597 and 610 to 935; these read EEID…KYLS and SGSG…EKSY. 643–650 contributes to the ATP binding site; it reads GVSGSGKS. A C4-type zinc finger spans residues 744-770; that stretch reads CEKCSGDGSIKIEMFFLPNVYITCDHC.

This sequence belongs to the ABC transporter superfamily. UvrA family. Forms a heterotetramer with UvrB during the search for lesions.

The protein localises to the cytoplasm. In terms of biological role, the UvrABC repair system catalyzes the recognition and processing of DNA lesions. UvrA is an ATPase and a DNA-binding protein. A damage recognition complex composed of 2 UvrA and 2 UvrB subunits scans DNA for abnormalities. When the presence of a lesion has been verified by UvrB, the UvrA molecules dissociate. This Mycoplasmopsis pulmonis (strain UAB CTIP) (Mycoplasma pulmonis) protein is UvrABC system protein A.